The following is a 138-amino-acid chain: MAKAIPKISSRRNGRIGSRKGARRIPKGVIHVQASFNNTIVTVTDVRGRVVSWSSAGTSGFKGTRRGTPFAAQTAAANAIRTVVDQGMQRAEVMIKGPGLGRDAALRAIRRSGILLTFVRDVTPMPHNGCRPPKKRRV.

The disordered stretch occupies residues 1–22 (MAKAIPKISSRRNGRIGSRKGA). Basic residues predominate over residues 9 to 22 (SSRRNGRIGSRKGA).

The protein belongs to the universal ribosomal protein uS11 family. As to quaternary structure, part of the 30S ribosomal subunit.

Its subcellular location is the plastid. The protein resides in the chloroplast. The polypeptide is Small ribosomal subunit protein uS11c (Nicotiana tabacum (Common tobacco)).